We begin with the raw amino-acid sequence, 149 residues long: Transcription antitermination protein NusB (149 aa).

Belongs to the NusB family.

Involved in transcription antitermination. Required for transcription of ribosomal RNA (rRNA) genes. Binds specifically to the boxA antiterminator sequence of the ribosomal RNA (rrn) operons. The polypeptide is Transcription antitermination protein NusB (Caulobacter vibrioides (strain ATCC 19089 / CIP 103742 / CB 15) (Caulobacter crescentus)).